Consider the following 190-residue polypeptide: CASP-like protein 1E1 (190 aa).

The segment at 1 to 23 (MEHESKNKVDGMEMEKGKKESGS) is disordered. At 1–28 (MEHESKNKVDGMEMEKGKKESGSRKGLE) the chain is on the cytoplasmic side. The helical transmembrane segment at 29–49 (LTMRVLALVLTMVAATVLGVA) threads the bilayer. Residues 50 to 83 (KQTKVVPIKLIPTLPPLNVSTTAKASYLSAFVYN) are Extracellular-facing. N-linked (GlcNAc...) asparagine glycosylation is present at Asn67. Residues 84–104 (ISANAIACGYTAISIVIVMIS) form a helical membrane-spanning segment. Topologically, residues 105-111 (KGKRSKS) are cytoplasmic. A helical transmembrane segment spans residues 112 to 132 (LLMAVLIGDLMMVALLFSSTG). Over 133 to 163 (AAGAIGLMGRHGNKHVMWKKVCGVFGKFCNQ) the chain is Extracellular. Residues 164 to 184 (AAVSVAITLIASVVFMLLVVL) traverse the membrane as a helical segment. At 185-190 (DALKLP) the chain is on the cytoplasmic side.

This sequence belongs to the Casparian strip membrane proteins (CASP) family. As to quaternary structure, homodimer and heterodimers.

Its subcellular location is the cell membrane. This is CASP-like protein 1E1 from Arabidopsis thaliana (Mouse-ear cress).